We begin with the raw amino-acid sequence, 302 residues long: ATP synthase gamma chain (302 aa).

It belongs to the ATPase gamma chain family. F-type ATPases have 2 components, CF(1) - the catalytic core - and CF(0) - the membrane proton channel. CF(1) has five subunits: alpha(3), beta(3), gamma(1), delta(1), epsilon(1). CF(0) has three main subunits: a, b and c.

The protein localises to the cell membrane. Functionally, produces ATP from ADP in the presence of a proton gradient across the membrane. The gamma chain is believed to be important in regulating ATPase activity and the flow of protons through the CF(0) complex. This chain is ATP synthase gamma chain, found in Leuconostoc citreum (strain KM20).